Consider the following 525-residue polypeptide: Frizzled-4 (525 aa).

Residues 1–24 (MERRGGGGRMLALLLAGLLGGARG) form the signal peptide. Over 25–200 (FGDEEERRCD…KCGYDAGLYS (176 aa)) the chain is Extracellular. An FZ domain is found at 28 to 149 (EEERRCDAIR…NDHNHMCMEG (122 aa)). 8 disulfides stabilise this stretch: Cys-33-Cys-94, Cys-41-Cys-87, Cys-78-Cys-116, Cys-105-Cys-146, Cys-109-Cys-133, Cys-169-Cys-188, Cys-192-Cys-270, and Cys-290-Cys-365. Asn-47 carries N-linked (GlcNAc...) asparagine glycosylation. Asn-132 carries N-linked (GlcNAc...) asparagine glycosylation. The helical transmembrane segment at 201-231 (RSAKEFTDIWMAVWASLCFISTAFTVLTFLI) threads the bilayer. The Cytoplasmic portion of the chain corresponds to 232–237 (DSSRFS). Residues 238–263 (YPERPIIFLSMCYNIYSIAYIVRLTV) form a helical membrane-spanning segment. Topologically, residues 264–287 (GRERISCDFEEAAEPVLIQEGLKN) are extracellular. A helical membrane pass occupies residues 288–321 (TGCAIIFLLMYFFGMASSIWWVILTLTWFLAAGL). The Cytoplasmic segment spans residues 322 to 324 (KWG). Residues 325–353 (HEAIEMHSSYFHIAAWAIPAVKTIVILIM) traverse the membrane as a helical segment. The Extracellular segment spans residues 354–371 (RLVDADELTGLCYVGNQN). Residues 372 to 406 (LDALTGFVVAPLFTYLVIGTLFIAAGLVALFKIRS) form a helical membrane-spanning segment. Residues 407 to 419 (NLQKDGTKTDKLE) are Cytoplasmic-facing. Residues 420 to 448 (RLMVKIGVFSVLYTVPATCVIACYFYEIS) traverse the membrane as a helical segment. Residues 449 to 461 (NWAVFRYSADDSN) are Extracellular-facing. Residues 462-483 (MAVEMLKIFMSLLVGITSGMWI) form a helical membrane-spanning segment. Residues 484-525 (WSAKTLHTWQKCSNRLVNSGKVKREKRADGWVKPGKGNETVV) lie on the Cytoplasmic side of the membrane. The Lys-Thr-X-X-X-Trp motif, mediates interaction with the PDZ domain of Dvl family members signature appears at 487–492 (KTLHTW). Residues 523 to 525 (TVV) carry the PDZ-binding motif.

It belongs to the G-protein coupled receptor Fz/Smo family. Interacts (via FZ domain) with TSKU; TSKU competes with WNT2B for binding to FZD4, inhibiting Wnt signaling and repressing peripheral eye development. In terms of tissue distribution, expressed in the developing kidney, interdigital spaces and optic cup.

It is found in the cell membrane. Functionally, receptor for Wnt proteins. Most frizzled receptors are coupled to the beta-catenin canonical signaling pathway, which leads to the activation of disheveled proteins, inhibition of GSK-3 kinase, nuclear accumulation of beta-catenin and activation of Wnt target genes. A second signaling pathway involving PKC and calcium fluxes has been seen for some family members, but it is not yet clear if it represents a distinct pathway or if it can be integrated in the canonical pathway, as PKC seems to be required for Wnt-mediated inactivation of GSK-3 kinase. Both pathways seem to involve interactions with G-proteins. May be involved in transduction and intercellular transmission of polarity information during tissue morphogenesis and/or in differentiated tissues. The chain is Frizzled-4 (FZD4) from Gallus gallus (Chicken).